The primary structure comprises 203 residues: MKALTARQQQVYDLVRDHISQTGMPPTRAEIASQLGFRSPNAAEEHLKALARKGVIEIVSGASRGIRLLLEEEPEGLPLIGRVAAGEPLLAQEHIESHYQVDPMLFKPSADFLLRVNGMSMKDIGIMDGDLLAVHKTQDVHNGQVIVARIEDEVTVKRFKKVGSKIELHAENPEFSPIIVDLREQSFTVEGLAVGVIRNGEWL.

Positions 28–48 (RAEIASQLGFRSPNAAEEHLK) form a DNA-binding region, H-T-H motif. Residues Ser-120 and Lys-157 each act as for autocatalytic cleavage activity in the active site.

This sequence belongs to the peptidase S24 family. Homodimer.

It catalyses the reaction Hydrolysis of Ala-|-Gly bond in repressor LexA.. Functionally, represses a number of genes involved in the response to DNA damage (SOS response), including recA and lexA. Binds to the 16 bp palindromic sequence 5'-CTGTATATATATACAG-3'. In the presence of single-stranded DNA, RecA interacts with LexA causing an autocatalytic cleavage which disrupts the DNA-binding part of LexA, leading to derepression of the SOS regulon and eventually DNA repair. The protein is LexA repressor of Proteus mirabilis (strain HI4320).